A 591-amino-acid chain; its full sequence is Metalloendopeptidase OPG085 (591 aa).

Zn(2+) is bound at residue histidine 41. The active site involves glutamate 44. Zn(2+) is bound by residues histidine 45 and glutamate 112.

It belongs to the peptidase M44 family. The cofactor is Zn(2+). Post-translationally, undergoes proteolytic processing during the course of infection. May be cleaved into 46 kDa and 22 kDa products (Potential).

The protein localises to the virion. In terms of biological role, probably involved in maturation of some viral proteins by processing them preferentially at Ala-Gly-|-Ser/Thr/Lys motifs. Does not seem to be responsible for the cleavage of major core proteins. The polypeptide is Metalloendopeptidase OPG085 (OPG085) (Monkeypox virus).